Reading from the N-terminus, the 173-residue chain is Calcium-binding protein 5 (173 aa).

4 EF-hand domains span residues 28 to 63, 82 to 99, 105 to 140, and 142 to 173; these read DEIE…MGYM, GRVD…KLLA, IGVQ…LLGE, and LTPR…MMSR. Positions 41, 43, 45, and 52 each coordinate Ca(2+). Residues Asp-118, Asn-120, Asp-122, Glu-124, Glu-129, Asp-155, Asn-157, Asp-159, Thr-161, and Glu-166 each coordinate Ca(2+).

As to quaternary structure, interacts with CACNA1C (via C-terminal CDB motif) in a calcium-dependent manner. Interacts with STXBP1. Interacts with MYO6. In terms of tissue distribution, retina.

It is found in the cytoplasm. Inhibits calcium-dependent inactivation of L-type calcium channel and shifts voltage dependence of activation to more depolarized membrane potentials. Involved in the transmission of light signals. May positively regulate neurotransmitter vesicle endocytosis and exocytosis in a salt-dependent manner. May play a role in the extension and network organization of neurites. The chain is Calcium-binding protein 5 (CABP5) from Homo sapiens (Human).